The following is a 504-amino-acid chain: MLSQRLIGRTAVKSAFRPSGLPTVVNASRWRRGYATEADRDLVIIGGGVAGYVAAIKAGQEGMKVTCIEKRGTLGGTCLNVGCIPSKSLLNNSHLYHTILHDTKHRGIEVGDVKLNLGQLMKAKEQSVSGLTKGIEFLFKKNGVEYLKGTGSFEDPHTVKVELNDGGETRVTGKNILIATGSEVTPFPGLEIDEKTIISSTGALSLDHVPKKFLVIGGGIIGLEMASVWSRLGSEVTVVEYLDQIGGPGMDTEISKNIQKILKKQGINFKTGTKVLNGEKTGDGVKINVEAAKGGKPETLEADVVLVAIGRRPYTKGLGLEKIGIELDERGRVIIDQEYRTKIPHIRCVGDATFGPMLAHKAEEEAVAVVEYIKKGYGHVNYGCIPAVMYTFPEVAWVGQSEQDLKKAGIPYRVGTFPFSANSRAKTNLDTEGFVKMLADPETDRLLGIHIIGPNAGEMIAEGTLALEYGASSEDIARTCHAHPTLAEAFKEAAMATYSKAIHF.

The transit peptide at 1–34 (MLSQRLIGRTAVKSAFRPSGLPTVVNASRWRRGY) directs the protein to the mitochondrion. FAD is bound by residues 69 to 78 (EKRGTLGGTC), Lys87, Gly151, and 180 to 182 (TGS). An intrachain disulfide couples Cys78 to Cys83. NAD(+) is bound by residues 217–224 (GGGIIGLE), Glu240, Val275, and Gly310. FAD contacts are provided by residues Asp351 and 357–360 (MLAH). The active-site Proton acceptor is His483.

Belongs to the class-I pyridine nucleotide-disulfide oxidoreductase family. Eukaryotic pyruvate dehydrogenase (PDH) complexes are organized as a core consisting of the oligomeric dihydrolipoamide acetyl-transferase (E2), around which are arranged multiple copies of pyruvate dehydrogenase (E1), dihydrolipoamide dehydrogenase (E3) and protein X (E3BP) bound by non-covalent bonds. The Chaetomium thermophilum PDH complex contains 60 E2 units, 12 E3BP units, about 20 E1 units, and 12 or more E3 units. The units are organized in 1 E2 60-mer, 4 E3BP trimers, about 20 E1 tetramers, and a maximum of 12 E3 dimers. The E3BP trimers are bound inside the icosahedral core with tetrahedral symmetry. It depends on FAD as a cofactor.

The protein resides in the mitochondrion. The enzyme catalyses N(6)-[(R)-dihydrolipoyl]-L-lysyl-[protein] + NAD(+) = N(6)-[(R)-lipoyl]-L-lysyl-[protein] + NADH + H(+). In terms of biological role, lipoamide dehydrogenase is a component of the alpha-ketoacid dehydrogenase complexes. This includes the pyruvate dehydrogenase complex, which catalyzes the overall conversion of pyruvate to acetyl-CoA and CO(2). Also acts as a component of the glycine cleavage system (glycine decarboxylase complex), which catalyzes the degradation of glycine. The 10-megadalton pyruvate dehydrogenase complex contains multiple copies of three enzymatic components: pyruvate dehydrogenase (E1), dihydrolipoamide acetyltransferase (E2) and lipoamide dehydrogenase (E3) and catalyzes the overall oxidative decarboxylation of pyruvate to form acetyl-CoA and CO(2). Within the complex, pyruvate and thiamine pyrophosphate (TPP or vitamin B1) are bound by pyruvate dehydrogenase E1 subunits alpha and beta and pyruvate is decarboxylated leading to the 2-carbon hydrohyethyl bound to TPP. The E2 component contains covalently-bound lipoyl cofactors and transfers the hydroxyethyl group from TPP to an oxidized form of covalently bound lipoamide, and the resulting acetyl group is then transferred to free coenzyme A to form acetyl-CoA and reduced dihydrolipoamide-E2. Finally, the flavoprotein dihydrolipoamide dehydrogenase (E3) re-oxidizes the lipoyl group of dihydrolipoamide-E2 to form lipoamide-E2 and NADH. A fourth subunit, E3BP, is responsible for tethering E3 in proximity to the core, forming the entire metabolon. This Chaetomium thermophilum (strain DSM 1495 / CBS 144.50 / IMI 039719) (Thermochaetoides thermophila) protein is Dihydrolipoamide dehydrogenase.